A 75-amino-acid polypeptide reads, in one-letter code: UPF0270 protein PP_1747 (75 aa).

This sequence belongs to the UPF0270 family.

The protein is UPF0270 protein PP_1747 of Pseudomonas putida (strain ATCC 47054 / DSM 6125 / CFBP 8728 / NCIMB 11950 / KT2440).